Consider the following 197-residue polypeptide: dITP/XTP pyrophosphatase (197 aa).

Position 8 to 13 (8 to 13) interacts with substrate; the sequence is TGNAGK. Residues glutamate 40 and aspartate 69 each contribute to the Mg(2+) site. Aspartate 69 serves as the catalytic Proton acceptor. Substrate contacts are provided by residues serine 70, 154–157, lysine 177, and 182–183; these read FGYD and HR.

Belongs to the HAM1 NTPase family. As to quaternary structure, homodimer. The cofactor is Mg(2+).

The catalysed reaction is XTP + H2O = XMP + diphosphate + H(+). It catalyses the reaction dITP + H2O = dIMP + diphosphate + H(+). The enzyme catalyses ITP + H2O = IMP + diphosphate + H(+). Functionally, pyrophosphatase that catalyzes the hydrolysis of nucleoside triphosphates to their monophosphate derivatives, with a high preference for the non-canonical purine nucleotides XTP (xanthosine triphosphate), dITP (deoxyinosine triphosphate) and ITP. Seems to function as a house-cleaning enzyme that removes non-canonical purine nucleotides from the nucleotide pool, thus preventing their incorporation into DNA/RNA and avoiding chromosomal lesions. The chain is dITP/XTP pyrophosphatase (rdgB) from Salmonella paratyphi A (strain ATCC 9150 / SARB42).